A 931-amino-acid polypeptide reads, in one-letter code: MPRAPHSMPLLLLLLLLSSLPQAQAAFPQDPTPLLTSDLQGASPSSWFRGLEDDAVAAELGLDFQRFLTLNRTLLVAARDHVFSFDLQAQEEGEGLVPNKFLTWRSQDMENCAVRGKLTDECYNYIRVLVPWNSQTLLACGTNSFSPMCRSYGITSLQQEGEELSGQARCPFDATQSTVAIFAEGSLYSATAADFQASDAVVYRSLGPQPPLRSAKYDSKWLREPHFVYALEHGEHVYFFFREVSVEDARLGRVQFSRVARVCKRDMGGSPRALDRHWTSFLKLRLNCSVPGDSTFYFDVLQSLTGPVNLHGRSALFGVFTTQTNSIPGSAVCAFYLDDIERGFEGKFKEQRSLDGAWTPVSEDKVPSPRPGSCAGVGAAASFSSSQDLPDDVLLFIKAHPLLDPAVPPATHQPLLTLTSRALLTQVAVDGMAGPHRNTTVLFLGSNDGTVLKVLPPGGQSLGSEPIVLEEIDAYSHARCSGKRSPRAARRIIGLELDTEGHRLFVAFPGCIVYLSLSRCARHGACQRSCLASLDPYCGWHRSRGCMSIRGPGGTDVDLTGNQESTEHGDCQDGATGSQSGPGDSAYGVRRDLSPASASRSIPIPLLLACVAAAFALGASVSGLLVSCACRRANRRRSKDIETPGLPRPLSLRSLARLHGGGPEPPPPPKDGDAAQTPQLYTTFLPPPDGGSPPELACLPTPETTPELPVKHLRASGGPWEWNQNGNNASEGPGRPPRGCSGAGGPAPRVLVRPPPPGCPGQAVEVTTLEELLRYLHGPQPPRKGSEPLASAPFTSRPPASEPGASLFVDSSPMPRDGVPPLRLDVPPEGKRAAPSGRPALSAPAPRLGVGGSRRLPFPTHRAPPGLLTRVPSGGPARYSGGPGRHLLYLGRPEGHRGRSLKRVDVKSPLSPKPPLASPPQPAPHGGHFNF.

A signal peptide spans Met1 to Ala25. At Ala26 to Pro605 the chain is on the extracellular side. Residues Pro31–Leu517 form the Sema domain. A glycan (N-linked (GlcNAc...) asparagine) is linked at Asn71. 4 disulfide bridges follow: Cys112–Cys122, Cys140–Cys149, Cys263–Cys374, and Cys288–Cys333. The N-linked (GlcNAc...) asparagine glycan is linked to Asn287. A glycan (N-linked (GlcNAc...) asparagine) is linked at Asn438. 4 disulfide bridges follow: Cys480-Cys511, Cys520-Cys538, Cys526-Cys571, and Cys530-Cys546. The disordered stretch occupies residues Asp556–Arg591. Residues Leu606–Val626 form a helical membrane-spanning segment. Topologically, residues Ser627 to Phe931 are cytoplasmic. Disordered stretches follow at residues Leu655–Ala747 and His777–Phe931. The span at Pro693–Leu708 shows a compositional bias: low complexity. A compositionally biased stretch (basic and acidic residues) spans Pro893 to Val906. Over residues Ser911–Ala923 the composition is skewed to pro residues.

The protein belongs to the semaphorin family.

It localises to the cell membrane. Functionally, may be a stop signal for the dorsal root ganglion neurons in their target areas, and possibly also for other neurons. May also be involved in the maintenance and remodeling of neuronal connections. The chain is Semaphorin-6C (Sema6c) from Mus musculus (Mouse).